The sequence spans 419 residues: CCA-adding enzyme (419 aa).

Residues Ser54 and Arg57 each coordinate ATP. 2 residues coordinate CTP: Ser54 and Arg57. Asp66, Asp68, and Asp118 together coordinate Mg(2+). ATP is bound by residues His141, Lys161, and Tyr170. His141, Lys161, and Tyr170 together coordinate CTP.

The protein belongs to the tRNA nucleotidyltransferase/poly(A) polymerase family. Archaeal CCA-adding enzyme subfamily. In terms of assembly, homodimer. Requires Mg(2+) as cofactor.

The enzyme catalyses a tRNA precursor + 2 CTP + ATP = a tRNA with a 3' CCA end + 3 diphosphate. It carries out the reaction a tRNA with a 3' CCA end + 2 CTP + ATP = a tRNA with a 3' CCACCA end + 3 diphosphate. Functionally, catalyzes the addition and repair of the essential 3'-terminal CCA sequence in tRNAs without using a nucleic acid template. Adds these three nucleotides in the order of C, C, and A to the tRNA nucleotide-73, using CTP and ATP as substrates and producing inorganic pyrophosphate. tRNA 3'-terminal CCA addition is required both for tRNA processing and repair. Also involved in tRNA surveillance by mediating tandem CCA addition to generate a CCACCA at the 3' terminus of unstable tRNAs. While stable tRNAs receive only 3'-terminal CCA, unstable tRNAs are marked with CCACCA and rapidly degraded. This chain is CCA-adding enzyme, found in Pyrobaculum aerophilum (strain ATCC 51768 / DSM 7523 / JCM 9630 / CIP 104966 / NBRC 100827 / IM2).